Consider the following 152-residue polypeptide: MSTVAELANAVVSNADQKDLLRLSWGVLSVDMEGTGLMLMANLFKTSSAARTKFARLGDVSAGKDNSKLRGHSITLMYALQNFIDALDNVDRLKCVVEKFAVNHINRQISADEFGEIVGPLRQTLKARMGSYFDEDTVSAWASLVAVVQAAL.

Ser-2 carries the N-acetylserine modification. The Globin domain occupies 12 to 152 (VSNADQKDLL…SLVAVVQAAL (141 aa)). The heme b site is built by His-72 and His-104.

Belongs to the globin family. Heterotetramer of two alpha chains and two beta chains.

The polypeptide is Globin-1 subunit beta (Anadara trapezia (Sydney cockle)).